Consider the following 760-residue polypeptide: Anti-sigma-I factor RsgI6 (760 aa).

Residues Met1–Tyr55 are Cytoplasmic-facing. In terms of domain architecture, RsgI N-terminal anti-sigma spans Ile2–Lys49. The helical transmembrane segment at Leu56–Ile76 threads the bilayer. The Extracellular segment spans residues Asn77–Pro760. Positions Ala274–Gln352 are disordered. Over residues Leu291 to Gln352 the composition is skewed to polar residues. Positions Asp402 to Leu701 constitute a GH10 domain. Glu538 functions as the Proton donor in the catalytic mechanism. The active-site Nucleophile is Glu635.

In the C-terminal section; belongs to the glycosyl hydrolase 10 (cellulase F) family. In terms of assembly, interacts (via RsgI N-terminal anti-sigma domain) with SigI6.

It is found in the cell membrane. The catalysed reaction is Endohydrolysis of (1-&gt;4)-beta-D-xylosidic linkages in xylans.. The protein operates within glycan degradation; xylan degradation. Functionally, anti-sigma factor for SigI6. Negatively regulates SigI6 activity through direct interaction. Binding of the polysaccharide substrate to the extracellular C-terminal sensing domain of RsgI6 may induce a conformational change in its N-terminal cytoplasmic region, leading to the release and activation of SigI6. Binds to and hydrolyzes insoluble and soluble xylan substrates. Has low enzymatic activity. This is Anti-sigma-I factor RsgI6 from Acetivibrio thermocellus (strain ATCC 27405 / DSM 1237 / JCM 9322 / NBRC 103400 / NCIMB 10682 / NRRL B-4536 / VPI 7372) (Clostridium thermocellum).